We begin with the raw amino-acid sequence, 215 residues long: LysM and putative peptidoglycan-binding domain-containing protein 1 (215 aa).

Residues 37–81 form the LysM domain; sequence LEHQVQPGDTLQGLALRYGVSMEQIKRANRLYTNDSIFLKKSLYI. 2 stretches are compositionally biased toward polar residues: residues 86–103 and 173–189; these read GQSD…SETE and GNRT…QQRS. Disordered regions lie at residues 86-133 and 148-203; these read GQSD…PVDF and AVKK…TRAS.

The chain is LysM and putative peptidoglycan-binding domain-containing protein 1 (lysmd1) from Xenopus laevis (African clawed frog).